The chain runs to 188 residues: Elongation factor P (188 aa).

Belongs to the elongation factor P family.

It is found in the cytoplasm. It participates in protein biosynthesis; polypeptide chain elongation. Functionally, involved in peptide bond synthesis. Stimulates efficient translation and peptide-bond synthesis on native or reconstituted 70S ribosomes in vitro. Probably functions indirectly by altering the affinity of the ribosome for aminoacyl-tRNA, thus increasing their reactivity as acceptors for peptidyl transferase. This chain is Elongation factor P, found in Chlorobaculum tepidum (strain ATCC 49652 / DSM 12025 / NBRC 103806 / TLS) (Chlorobium tepidum).